Here is a 421-residue protein sequence, read N- to C-terminus: Putative transporter AmpG 3 (421 aa).

The next 12 helical transmembrane spans lie at 6–26, 41–61, 80–100, 104–124, 139–159, 166–186, 230–250, 274–294, 297–317, 324–344, 360–380, and 388–408; these read YLIG…LIFF, IIGA…WSPF, WALV…KRSP, LCIT…QDIV, LSIV…LGSV, IIFG…VGPI, LLLI…PMAM, LLIM…IGIF, VLIG…LATI, FIIT…IISI, AISA…GGIC, and VFFL…YTIY.

The protein belongs to the major facilitator superfamily.

It is found in the cell inner membrane. The chain is Putative transporter AmpG 3 (ampG3) from Rickettsia prowazekii (strain Madrid E).